Here is a 541-residue protein sequence, read N- to C-terminus: Sorting nexin-27 (541 aa).

The interval Met1–Ser26 is disordered. Positions Asn17 to Ser26 are enriched in gly residues. The PDZ domain occupies Val43–Pro136. Residues Ser51 and Ser62 each carry the phosphoserine modification. Residues Gln161–Tyr269 enclose the PX domain. Positions Ser273 to Phe362 constitute a Ras-associating domain. The segment at Ser273–Phe362 is FERM-like region F1. Positions Asn373 to Cys421 are FERM-like region F2. Positions Asn425–Lys525 are FERM-like region F3.

As to quaternary structure, core component of the SNX27-retromer, a multiprotein complex composed of SNX27, the WASH complex and the retromer complex. Interacts (via PDZ domain) with a number of target transmembrane proteins (via PDZ-binding motif): ABCC4, ADRB2, ARHGEF7, GRIA1, GRIA2, GRIN1, GRIN2A GRIN2C, KCNJ6, KCNJ9 and SLC2A1/GLUT1. Interacts (via the FERM-like regions) with the WASH complex. Interacts with SNX1. Interacts with CYTIP. Interacts with DGKZ. Interacts with MCC. Interacts (via PDZ domains) with SLC9A3; directs SLC9A3 membrane insertion from early endosomes to the plasma membrane.

It is found in the early endosome membrane. The protein localises to the cytoplasm. The protein resides in the cytosol. Its function is as follows. Involved in the retrograde transport from endosome to plasma membrane, a trafficking pathway that promotes the recycling of internalized transmembrane proteins. Following internalization, endocytosed transmembrane proteins are delivered to early endosomes and recycled to the plasma membrane instead of being degraded in lysosomes. SNX27 specifically binds and directs sorting of a subset of transmembrane proteins containing a PDZ-binding motif at the C-terminus: following interaction with target transmembrane proteins, associates with the retromer complex, preventing entry into the lysosomal pathway, and promotes retromer-tubule based plasma membrane recycling. SNX27 also binds with the WASH complex. Interacts with membranes containing phosphatidylinositol-3-phosphate (PtdIns(3P)). May participate in establishment of natural killer cell polarity. Recruits CYTIP to early endosomes. This is Sorting nexin-27 (SNX27) from Bos taurus (Bovine).